The chain runs to 315 residues: tRNA pseudouridine synthase B (315 aa).

The Nucleophile role is filled by aspartate 54.

The protein belongs to the pseudouridine synthase TruB family. Type 1 subfamily.

The catalysed reaction is uridine(55) in tRNA = pseudouridine(55) in tRNA. Functionally, responsible for synthesis of pseudouridine from uracil-55 in the psi GC loop of transfer RNAs. The protein is tRNA pseudouridine synthase B of Agrobacterium fabrum (strain C58 / ATCC 33970) (Agrobacterium tumefaciens (strain C58)).